A 614-amino-acid polypeptide reads, in one-letter code: UvrABC system protein C (614 aa).

The GIY-YIG domain occupies 14–91 (TSPGCYIHKD…IKENKPKYNI (78 aa)). A UVR domain is found at 196–231 (NKIIDELKGKMAAAAQTMEFERAAEYRDLIQAIGTL). The tract at residues 595 to 614 (LPQVAEERVDYQTEGNHNKP) is disordered.

The protein belongs to the UvrC family. In terms of assembly, interacts with UvrB in an incision complex.

It is found in the cytoplasm. In terms of biological role, the UvrABC repair system catalyzes the recognition and processing of DNA lesions. UvrC both incises the 5' and 3' sides of the lesion. The N-terminal half is responsible for the 3' incision and the C-terminal half is responsible for the 5' incision. This is UvrABC system protein C from Streptococcus pneumoniae (strain Taiwan19F-14).